The chain runs to 151 residues: D-aminoacyl-tRNA deacylase (151 aa).

Positions 138–139 (GP) match the Gly-cisPro motif, important for rejection of L-amino acids motif.

It belongs to the DTD family. In terms of assembly, homodimer.

The protein localises to the cytoplasm. It carries out the reaction glycyl-tRNA(Ala) + H2O = tRNA(Ala) + glycine + H(+). The enzyme catalyses a D-aminoacyl-tRNA + H2O = a tRNA + a D-alpha-amino acid + H(+). In terms of biological role, an aminoacyl-tRNA editing enzyme that deacylates mischarged D-aminoacyl-tRNAs. Also deacylates mischarged glycyl-tRNA(Ala), protecting cells against glycine mischarging by AlaRS. Acts via tRNA-based rather than protein-based catalysis; rejects L-amino acids rather than detecting D-amino acids in the active site. By recycling D-aminoacyl-tRNA to D-amino acids and free tRNA molecules, this enzyme counteracts the toxicity associated with the formation of D-aminoacyl-tRNA entities in vivo and helps enforce protein L-homochirality. In Magnetococcus marinus (strain ATCC BAA-1437 / JCM 17883 / MC-1), this protein is D-aminoacyl-tRNA deacylase.